A 386-amino-acid chain; its full sequence is Vesicle-associated protein 2-2 (386 aa).

Met-1 bears the N-acetylmethionine mark. The Cytoplasmic portion of the chain corresponds to 1–363; sequence MNMPLLDIQP…TKKIVKEVHN (363 aa). Positions 5 to 125 constitute an MSP domain; it reads LLDIQPRTLQ…EENKLRVTLV (121 aa). A Phosphoserine modification is found at Ser-279. A coiled-coil region spans residues 300 to 353; it reads ELKLVKDIEEMKLKVDALESKLKQADSTISKLMEERSISSQHRQSLQHELAELR. A helical; Anchor for type IV membrane protein transmembrane segment spans residues 364-384; the sequence is GFPLLYVCVVAFIAYVIGHFL.

It belongs to the VAMP-associated protein (VAP) (TC 9.B.17) family. As to quaternary structure, interacts with cowpea mosaic virus (CPMV) NTP-binding protein (NTB).

It is found in the endoplasmic reticulum membrane. May play a role in vesicle trafficking. The protein is Vesicle-associated protein 2-2 (PVA22) of Arabidopsis thaliana (Mouse-ear cress).